A 310-amino-acid chain; its full sequence is Homoserine kinase (310 aa).

91–101 (PIGSGLGSSAC) is a binding site for ATP.

This sequence belongs to the GHMP kinase family. Homoserine kinase subfamily.

Its subcellular location is the cytoplasm. The catalysed reaction is L-homoserine + ATP = O-phospho-L-homoserine + ADP + H(+). The protein operates within amino-acid biosynthesis; L-threonine biosynthesis; L-threonine from L-aspartate: step 4/5. Functionally, catalyzes the ATP-dependent phosphorylation of L-homoserine to L-homoserine phosphate. In Escherichia coli O139:H28 (strain E24377A / ETEC), this protein is Homoserine kinase.